Consider the following 286-residue polypeptide: MSIISTKYLLQDAQANGYAVPAFNIHNAETIQAILEVCSEMRSPVILAGTPGTFKHIALEEIYALCSAYSMTYNMPLALHLDHHESRDDIRRKVHAGVRSAMIDGSHFPFAENVKLVKSVVDFCHSQDCSVEAELGRLGGVEDDMSVDAESAFLTDPQEAKRFVELTGVDSLAVAIGTAHGLYSKTPKIDFQRLAEIREVVDVPLVLHGASDVPDEFVRRTIELGVTKVNVATELKIAFAGAVKAWFAENPQGNDPRYYMRVGMDAMKEVVRNKINVCGSANRISA.

D82 acts as the Proton donor in catalysis. The Zn(2+) site is built by H83 and H180. G181 provides a ligand contact to dihydroxyacetone phosphate. H208 lines the Zn(2+) pocket. Residues 209–211 (GAS) and 230–233 (NVAT) contribute to the dihydroxyacetone phosphate site.

It belongs to the class II fructose-bisphosphate aldolase family. TagBP aldolase KbaY subfamily. As to quaternary structure, homotetramer. Forms a complex with KbaZ. Zn(2+) is required as a cofactor.

The catalysed reaction is D-tagatofuranose 1,6-bisphosphate = D-glyceraldehyde 3-phosphate + dihydroxyacetone phosphate. It functions in the pathway carbohydrate metabolism; D-tagatose 6-phosphate degradation; D-glyceraldehyde 3-phosphate and glycerone phosphate from D-tagatose 6-phosphate: step 2/2. In terms of biological role, catalytic subunit of the tagatose-1,6-bisphosphate aldolase KbaYZ, which catalyzes the reversible aldol condensation of dihydroxyacetone phosphate (DHAP or glycerone-phosphate) with glyceraldehyde 3-phosphate (G3P) to produce tagatose 1,6-bisphosphate (TBP). Requires KbaZ subunit for full activity and stability. The polypeptide is D-tagatose-1,6-bisphosphate aldolase subunit KbaY (Escherichia coli O127:H6 (strain E2348/69 / EPEC)).